A 135-amino-acid polypeptide reads, in one-letter code: MGLTSQLIPVLVCLLVCTSHFVHGHKCDITLAEIIKTLNILTTRKNSCMELPVADVFAAPKNTTEKETFCRVGIELRRIYRSHTCLNKFLGGLDRNLNSLASKTCSVNEAKTSTSTLKDLLERLKTIMKEKYSKC.

The first 24 residues, 1-24 (MGLTSQLIPVLVCLLVCTSHFVHG), serve as a signal peptide directing secretion. 3 disulfides stabilise this stretch: C27/C135, C48/C85, and C70/C105. N-linked (GlcNAc...) asparagine glycosylation occurs at N62.

Belongs to the IL-4/IL-13 family.

It is found in the secreted. In terms of biological role, participates in at least several B-cell activation processes as well as of other cell types. It is a costimulator of DNA-synthesis. It induces the expression of class II MHC molecules on resting B-cells. It enhances both secretion and cell surface expression of IgE and IgG1. It also regulates the expression of the low affinity Fc receptor for IgE (CD23) on both lymphocytes and monocytes. Positively regulates IL31RA expression in macrophages. Stimulates autophagy in dendritic cells by interfering with mTORC1 signaling and through the induction of RUFY4. The protein is Interleukin-4 (IL4) of Bos taurus (Bovine).